Reading from the N-terminus, the 456-residue chain is Signal transduction histidine-protein kinase ArlS (456 aa).

Helical transmembrane passes span 13 to 33 and 157 to 177; these read LITT…IIFF and IVAL…SYIF. The HAMP domain maps to 179-232; the sequence is SQITKPIVTMSNKMNQIRRDGFQNKLELTTNYEETDNLIDTFNEMMYQIEESFN. In terms of domain architecture, Histidine kinase spans 240-456; it reads DASHELRTPL…TFKISFPVLN (217 aa). At histidine 243 the chain carries Phosphohistidine; by autocatalysis.

Autophosphorylated.

The protein localises to the cell membrane. It catalyses the reaction ATP + protein L-histidine = ADP + protein N-phospho-L-histidine.. Functionally, member of the two-component regulatory system ArlS/ArlR. ArlS probably functions as a sensor protein kinase which is autophosphorylated at a histidine residue and transfers its phosphate group to ArlR. This Staphylococcus epidermidis (strain ATCC 35984 / DSM 28319 / BCRC 17069 / CCUG 31568 / BM 3577 / RP62A) protein is Signal transduction histidine-protein kinase ArlS (arlS).